A 122-amino-acid chain; its full sequence is N(2)-fixation sustaining protein CowN (122 aa).

It belongs to the CowN family.

Its function is as follows. Is required to sustain N(2)-dependent growth in the presence of low levels of carbon monoxide (CO). Probably acts by protecting the N(2) fixation ability of the nitrogenase complex, which is inactivated in the presence of CO. This Azorhizobium caulinodans (strain ATCC 43989 / DSM 5975 / JCM 20966 / LMG 6465 / NBRC 14845 / NCIMB 13405 / ORS 571) protein is N(2)-fixation sustaining protein CowN.